Here is an 851-residue protein sequence, read N- to C-terminus: UPF0508 protein CAGL0M08074g (851 aa).

The protein belongs to the UPF0508 family.

This Candida glabrata (strain ATCC 2001 / BCRC 20586 / JCM 3761 / NBRC 0622 / NRRL Y-65 / CBS 138) (Yeast) protein is UPF0508 protein CAGL0M08074g.